Here is a 365-residue protein sequence, read N- to C-terminus: Carbamoyl phosphate synthase small chain (365 aa).

2 CPSase regions span residues 1 to 166 and 1 to 169; these read MKRQ…PSPG and MKRQ…GRGH. Ser45, Gly218, and Gly220 together coordinate L-glutamine. One can recognise a Glutamine amidotransferase type-1 domain in the interval 170–357; sequence RVVLVDFGMK…LTMIENFKKE (188 aa). The active-site Nucleophile is the Cys245. Residues Leu246, Gln249, Asn287, Gly289, and Tyr290 each coordinate L-glutamine. Catalysis depends on residues His330 and Glu332.

It belongs to the CarA family. As to quaternary structure, composed of two chains; the small (or glutamine) chain promotes the hydrolysis of glutamine to ammonia, which is used by the large (or ammonia) chain to synthesize carbamoyl phosphate. Tetramer of heterodimers (alpha,beta)4.

It carries out the reaction hydrogencarbonate + L-glutamine + 2 ATP + H2O = carbamoyl phosphate + L-glutamate + 2 ADP + phosphate + 2 H(+). It catalyses the reaction L-glutamine + H2O = L-glutamate + NH4(+). Its pathway is amino-acid biosynthesis; L-arginine biosynthesis; carbamoyl phosphate from bicarbonate: step 1/1. The protein operates within pyrimidine metabolism; UMP biosynthesis via de novo pathway; (S)-dihydroorotate from bicarbonate: step 1/3. In terms of biological role, small subunit of the glutamine-dependent carbamoyl phosphate synthetase (CPSase). CPSase catalyzes the formation of carbamoyl phosphate from the ammonia moiety of glutamine, carbonate, and phosphate donated by ATP, constituting the first step of 2 biosynthetic pathways, one leading to arginine and/or urea and the other to pyrimidine nucleotides. The small subunit (glutamine amidotransferase) binds and cleaves glutamine to supply the large subunit with the substrate ammonia. The polypeptide is Carbamoyl phosphate synthase small chain (Bacillus cereus (strain ATCC 10987 / NRS 248)).